The following is a 298-amino-acid chain: Protoheme IX farnesyltransferase (298 aa).

A run of 9 helical transmembrane segments spans residues V16–P36, A45–L65, V93–I113, T114–K134, I141–G161, S172–F192, V223–L243, G244–P264, and I277–V297.

It belongs to the UbiA prenyltransferase family. Protoheme IX farnesyltransferase subfamily.

It localises to the cell inner membrane. The catalysed reaction is heme b + (2E,6E)-farnesyl diphosphate + H2O = Fe(II)-heme o + diphosphate. Its pathway is porphyrin-containing compound metabolism; heme O biosynthesis; heme O from protoheme: step 1/1. Functionally, converts heme B (protoheme IX) to heme O by substitution of the vinyl group on carbon 2 of heme B porphyrin ring with a hydroxyethyl farnesyl side group. This chain is Protoheme IX farnesyltransferase, found in Xanthomonas oryzae pv. oryzae (strain MAFF 311018).